Consider the following 331-residue polypeptide: dTDP-glucose 4,6-dehydratase (331 aa).

Residues 11–12 (FI), 33–36 (DALT), 57–58 (DI), 77–81 (FAAET), and Ser-96 contribute to the NAD(+) site. Thr-81 contacts substrate. Residue Thr-120 participates in substrate binding. Catalysis depends on Asp-121, which acts as the Proton donor. Residues Glu-122 and Tyr-147 each act as proton acceptor in the active site. Position 147-151 (147-151 (YSSTK)) interacts with NAD(+). Asn-176 contacts substrate. Asn-177 contributes to the NAD(+) binding site. Substrate is bound by residues 186-191 (KFIPRQ), 202-204 (KLY), Arg-211, Asn-246, and 269-273 (DRAGH).

This sequence belongs to the NAD(P)-dependent epimerase/dehydratase family. dTDP-glucose dehydratase subfamily. Homodimer. It depends on NAD(+) as a cofactor.

The enzyme catalyses dTDP-alpha-D-glucose = dTDP-4-dehydro-6-deoxy-alpha-D-glucose + H2O. It functions in the pathway carbohydrate biosynthesis; dTDP-L-rhamnose biosynthesis. Functionally, catalyzes the dehydration of dTDP-D-glucose to form dTDP-6-deoxy-D-xylo-4-hexulose via a three-step process involving oxidation, dehydration and reduction. Involved in the biosynthesis of the dTDP-L-rhamnose which is a component of the critical linker, D-N-acetylglucosamine-L-rhamnose disaccharide, which connects the galactan region of arabinogalactan to peptidoglycan via a phosphodiester linkage. This Mycolicibacterium smegmatis (strain ATCC 700084 / mc(2)155) (Mycobacterium smegmatis) protein is dTDP-glucose 4,6-dehydratase (rmlB).